A 1357-amino-acid chain; its full sequence is DNA-directed RNA polymerase subunit beta (1357 aa).

The protein belongs to the RNA polymerase beta chain family. The RNAP catalytic core consists of 2 alpha, 1 beta, 1 beta' and 1 omega subunit. When a sigma factor is associated with the core the holoenzyme is formed, which can initiate transcription.

The catalysed reaction is RNA(n) + a ribonucleoside 5'-triphosphate = RNA(n+1) + diphosphate. Its function is as follows. DNA-dependent RNA polymerase catalyzes the transcription of DNA into RNA using the four ribonucleoside triphosphates as substrates. In Pseudomonas putida (strain GB-1), this protein is DNA-directed RNA polymerase subunit beta.